The following is a 232-amino-acid chain: Large ribosomal subunit protein uL1 (232 aa).

The protein belongs to the universal ribosomal protein uL1 family. As to quaternary structure, part of the 50S ribosomal subunit.

Functionally, binds directly to 23S rRNA. The L1 stalk is quite mobile in the ribosome, and is involved in E site tRNA release. In terms of biological role, protein L1 is also a translational repressor protein, it controls the translation of the L11 operon by binding to its mRNA. This chain is Large ribosomal subunit protein uL1, found in Chelativorans sp. (strain BNC1).